Here is a 294-residue protein sequence, read N- to C-terminus: Lipoyl synthase (294 aa).

7 residues coordinate [4Fe-4S] cluster: Cys35, Cys40, Cys46, Cys61, Cys65, Cys68, and Ser275. Residues 46 to 264 enclose the Radical SAM core domain; that stretch reads CWGGGTATVM…REAGLGLGFR (219 aa).

It belongs to the radical SAM superfamily. Lipoyl synthase family. [4Fe-4S] cluster is required as a cofactor.

The protein localises to the cytoplasm. It carries out the reaction [[Fe-S] cluster scaffold protein carrying a second [4Fe-4S](2+) cluster] + N(6)-octanoyl-L-lysyl-[protein] + 2 oxidized [2Fe-2S]-[ferredoxin] + 2 S-adenosyl-L-methionine + 4 H(+) = [[Fe-S] cluster scaffold protein] + N(6)-[(R)-dihydrolipoyl]-L-lysyl-[protein] + 4 Fe(3+) + 2 hydrogen sulfide + 2 5'-deoxyadenosine + 2 L-methionine + 2 reduced [2Fe-2S]-[ferredoxin]. The protein operates within protein modification; protein lipoylation via endogenous pathway; protein N(6)-(lipoyl)lysine from octanoyl-[acyl-carrier-protein]: step 2/2. In terms of biological role, catalyzes the radical-mediated insertion of two sulfur atoms into the C-6 and C-8 positions of the octanoyl moiety bound to the lipoyl domains of lipoate-dependent enzymes, thereby converting the octanoylated domains into lipoylated derivatives. In Anaeromyxobacter sp. (strain Fw109-5), this protein is Lipoyl synthase.